We begin with the raw amino-acid sequence, 179 residues long: Large ribosomal subunit protein uL5 (179 aa).

The protein belongs to the universal ribosomal protein uL5 family. In terms of assembly, part of the 50S ribosomal subunit; part of the 5S rRNA/L5/L18/L25 subcomplex. Contacts the 5S rRNA and the P site tRNA. Forms a bridge to the 30S subunit in the 70S ribosome.

This is one of the proteins that bind and probably mediate the attachment of the 5S RNA into the large ribosomal subunit, where it forms part of the central protuberance. In the 70S ribosome it contacts protein S13 of the 30S subunit (bridge B1b), connecting the 2 subunits; this bridge is implicated in subunit movement. Contacts the P site tRNA; the 5S rRNA and some of its associated proteins might help stabilize positioning of ribosome-bound tRNAs. The chain is Large ribosomal subunit protein uL5 from Xylella fastidiosa (strain M12).